The following is a 201-amino-acid chain: Calcium channel flower (201 aa).

3 helical membrane-spanning segments follow: residues 37–57 (LGIVGAFFAILFGLWNVLSII), 59–79 (LSVSCLVAGIIQMIAGFVVMA), and 103–120 (PMYFRAGLYCALAVPPIF).

It belongs to the calcium channel flower family. Homomultimer. Associates with the dally/ magu complex.

Its subcellular location is the cell membrane. The protein resides in the cytoplasmic vesicle. It localises to the secretory vesicle. It is found in the synaptic vesicle membrane. The protein localises to the presynaptic cell membrane. Its subcellular location is the endosome. Channel activity is inhibited by La(3+), which reduces Ca(2+) influx and thus inhibits it's function in promoting activity-dependent bulk endocytosis (ADBE) in response to high stimuli. Functionally, transmembrane protein which mediates synaptic endocytosis, fitness-based cell culling, neuronal culling, morphogen gradient scaling, and calcium transport. Regulates synaptic endocytosis and hence couples exo- with endocytosis. Controls two major modes of synaptic vesicle (SV) endocytosis in the synaptic boutons of neuromuscular junctions (NMJs); Ca(2+) channel-independent Clathrin-mediated endocytosis (CME) in response to mild stimulation, and Ca(2+) channel-dependent activity-dependent bulk endocytosis (ADBE) in response to strong stimulation. Functions in ADBE and subsequent SV reformation from bulk endosomes by initiating Ca(2+) channel-dependent phosphatidylinositol 4,5-bisphosphate (PtdIns(4,5)P2) compartmentalization in synaptic boutons. There it acts at the periactive zone to provide the low Ca(2+) levels required to initiate Calcineurin activation and upregulate PtdIns(4,5)P2. Conversely PtdIns(4,5)P2 enhances fwe Ca(2+) channel-activity, establishing a positive feedback loop that induces PtdIns(4,5)P2 microdomain at the periactive zone. These microdomains trigger bulk membrane invagination (i.e. ADBE) by triggering actin polymerization while also promoting localization of fwe to bulk endosomes, thereby removing the ADBE trigger to reduce endocytosis and prevent excess membrane uptake. PtdIns(4,5)P2 then promotes SV reformation from the bulk endosomes, to coordinate ADBE and subsequent SV reformation. Different combinations of the flower isoforms at the cell membrane are also required for the identification and elimination of suboptimal or supernumerary cells during development, regeneration, and adulthood. Required for the recognition and elimination of unfit cells in the developing wing during cell competition. In the developing pupal retina, mediates the elimination of unwanted postmitotic neurons, including supernumerary photoreceptor neurons that form at the periphery of the retina and are contained within incomplete ommatidia units. Also required for efficient elimination and replacement of old neurons by newly generated neurons during regeneration in the adult brain following mechanical injury. Downstream of the flower fitness fingerprints, cells identified as unwanted or unfit are eliminated via apoptosis through the expression of ahuizotl (azot). However, the cells marked for elimination by the flower isoforms only undergo apoptosis if additional thresholds are met; (1) their neighboring fit/healthy cells express different levels of the fwe isoforms, and (2) the levels of the protective signal SPARC expressed by the loser or unwanted cells are unable to inhibit caspase activation. These additional thresholds for flower-mediated apoptosis, allows useful cells to recover from transient and limited stress before they are unnecessarily eliminated. Functions with dally and magu in a mechanism of scaling, which utilises apoptosis to ensure that the dpp morphogen gradient, which mediates organ growth, remains proportional to the size of the growing wing. In this mechanism, fwe represses dally- and Magu-dependent activity in expanding the gradient, and dally/Magu inhibits fwe-dependent apoptosis to keep cell death rate low. When the levels of these different proteins are optimally regulated the gradient correctly scales with organ growth but when this fails, fwe-mediated apoptosis is activated to trim the developing tissue to match the correct size of the gradient. The sequence is that of Calcium channel flower from Drosophila willistoni (Fruit fly).